A 346-amino-acid chain; its full sequence is Heparan sulfate glucosamine 3-O-sulfotransferase 5 (346 aa).

Over 1–12 (MLFKQQVWLRQK) the chain is Cytoplasmic. The helical; Signal-anchor for type II membrane protein transmembrane segment at 13–32 (LLVLGSLAVGSLLYLVARVG) threads the bilayer. Residues 33-346 (SLDRLQPICP…QITGRTLNWP (314 aa)) lie on the Lumenal side of the membrane. Asn75 carries an N-linked (GlcNAc...) asparagine glycan. 100–104 (KGGTR) provides a ligand contact to 3'-phosphoadenylyl sulfate. Substrate contacts are provided by residues 122 to 128 (EIHFFDN) and 155 to 158 (KSPA). Asn173 is a glycosylation site (N-linked (GlcNAc...) asparagine). Positions 183 and 191 each coordinate 3'-phosphoadenylyl sulfate. A glycan (N-linked (GlcNAc...) asparagine) is linked at Asn204. Position 226 to 227 (226 to 227 (YK)) interacts with substrate. Asn287 carries an N-linked (GlcNAc...) asparagine glycan. Position 293 (Tyr293) interacts with 3'-phosphoadenylyl sulfate. A disulfide bridge connects residues Cys294 and Cys304. 309–313 (KGRIH) is a 3'-phosphoadenylyl sulfate binding site.

It belongs to the sulfotransferase 1 family.

It localises to the golgi apparatus membrane. It catalyses the reaction alpha-D-glucosaminyl-[heparan sulfate](n) + 3'-phosphoadenylyl sulfate = 3-sulfo-alpha-D-glucosaminyl-[heparan sulfate](n) + adenosine 3',5'-bisphosphate + H(+). Functionally, sulfotransferase that utilizes 3'-phospho-5'-adenylyl sulfate (PAPS) to catalyze the transfer of a sulfo group to position 3 of glucosamine residues in heparan. Catalyzes the rate limiting step in the biosynthesis of heparan sulfate (HSact). This modification is a crucial step in the biosynthesis of anticoagulant heparan sulfate as it completes the structure of the antithrombin pentasaccharide binding site. Also generates GlcUA-GlcNS or IdoUA-GlcNS and IdoUA2S-GlcNH2. This is Heparan sulfate glucosamine 3-O-sulfotransferase 5 (Hs3st5) from Mus musculus (Mouse).